A 995-amino-acid polypeptide reads, in one-letter code: Pheromone-regulated membrane protein 10 (995 aa).

4 disordered regions span residues 1 to 217, 253 to 299, 326 to 407, and 425 to 508; these read MSSH…GEKH, GRVL…AVEM, DQSF…YIAP, and NPQD…NPDQ. Positions 74-88 are enriched in low complexity; the sequence is SNSSTTNNSTESSGS. Residues 110 to 121 are compositionally biased toward basic and acidic residues; sequence VKGESGDAHEGS. Low complexity predominate over residues 157–166; the sequence is SRGSVGSSSS. Residues 170–187 are compositionally biased toward basic and acidic residues; the sequence is KGSDDVNEKETNLDHDYD. Gly residues predominate over residues 259-269; sequence GSGGGGGGGLI. A compositionally biased stretch (acidic residues) spans 283–296; sequence EEKEVGGGGEDDGA. Polar residues predominate over residues 326 to 347; sequence DQSFTYDEPNQSAGSSRNSTAP. Basic and acidic residues-rich tracts occupy residues 359–371 and 385–396; these read DDHK…DQGK and GNDDPEDQHLLL. Residues 495–506 show a composition bias toward acidic residues; that stretch reads EADDEDEDEENP. 10 helical membrane-spanning segments follow: residues 678-698, 700-720, 726-746, 752-772, 794-814, 833-850, 858-878, 881-901, 906-926, and 965-985; these read VFLY…GGWL, IPVT…VSSM, SVFE…IGSI, FCFS…YIIL, IIYS…FGWV, KYRI…GLIN, PVMM…GKHF, VPEF…NVYS, GMAV…GIAS, and VEVS…VYPF.

This sequence belongs to the ThrE exporter (TC 2.A.79) family.

The protein resides in the membrane. This chain is Pheromone-regulated membrane protein 10, found in Pichia sorbitophila (strain ATCC MYA-4447 / BCRC 22081 / CBS 7064 / NBRC 10061 / NRRL Y-12695) (Hybrid yeast).